The primary structure comprises 297 residues: Undecaprenyl-diphosphatase 3 (297 aa).

Helical transmembrane passes span 39 to 59 (PGAA…LIYF), 89 to 109 (WLVL…QDAI), 118 to 138 (LIAT…WYAS), 203 to 223 (FLLA…SIGG), 237 to 257 (PTIV…AWFL), and 268 to 288 (FVLY…GGAI).

It belongs to the UppP family.

It is found in the cell membrane. The catalysed reaction is di-trans,octa-cis-undecaprenyl diphosphate + H2O = di-trans,octa-cis-undecaprenyl phosphate + phosphate + H(+). Functionally, catalyzes the dephosphorylation of undecaprenyl diphosphate (UPP). Confers resistance to bacitracin. The protein is Undecaprenyl-diphosphatase 3 of Frankia alni (strain DSM 45986 / CECT 9034 / ACN14a).